Reading from the N-terminus, the 487-residue chain is PPE family protein PPE10 (487 aa).

The span at Ala-398 to Gly-424 shows a compositional bias: low complexity. The disordered stretch occupies residues Ala-398–Glu-487. Polar residues predominate over residues Pro-428–Arg-446.

It belongs to the mycobacterial PPE family.

The protein localises to the secreted. In terms of biological role, plays a major role in the integrity and stability of the capsule. The protein is PPE family protein PPE10 (PPE10) of Mycobacterium tuberculosis (strain CDC 1551 / Oshkosh).